The primary structure comprises 900 residues: Methionine--tRNA ligase, cytoplasmic (900 aa).

The region spanning 74–198 is the GST C-terminal domain; that stretch reads GWEQDDLTNQ…VLKQQGVLAL (125 aa). The short motif at 273 to 283 is the 'HIGH' region element; sequence PYVNNVPHLGN. The 'KMSKS' region motif lies at 593 to 597; that stretch reads KFSKS. Lysine 596 is an ATP binding site. Residue serine 825 is modified to Phosphoserine. The residue at position 835 (threonine 835) is a Phosphothreonine. In terms of domain architecture, WHEP-TRS spans 841-897; the sequence is QIQALMDEVTKQGNIVRELKAQKADKNEVAAEVAKLLDLKKQLAVAEGKPPEAPKGK.

It belongs to the class-I aminoacyl-tRNA synthetase family. In terms of assembly, monomer. Part of a multisubunit complex that groups tRNA ligases for Arg (RARS1), Asp (DARS1), Gln (QARS1), Ile (IARS1), Leu (LARS1), Lys (KARS1), Met (MARS1) the bifunctional ligase for Glu and Pro (EPRS1) and the auxiliary subunits AIMP1/p43, AIMP2/p38 and EEF1E1/p18. Forms a linear complex that contains MARS1, EEF1E1, EPRS1 and AIMP2 that is at the core of the multisubunit complex.

The protein localises to the cytoplasm. The protein resides in the cytosol. Its subcellular location is the nucleus. It localises to the nucleolus. It carries out the reaction tRNA(Met) + L-methionine + ATP = L-methionyl-tRNA(Met) + AMP + diphosphate. With respect to regulation, enzyme activity is increased by spermidine, EEF1A1, and when the Mg(2+) concentration is increased from 5 mM to 13 mM (in vitro), possibly by promoting the dissociation of the complex between the enzyme and its product. Its function is as follows. Catalyzes the specific attachment of an amino acid to its cognate tRNA in a 2 step reaction: the amino acid (AA) is first activated by ATP to form AA-AMP and then transferred to the acceptor end of the tRNA. Plays a role in the synthesis of ribosomal RNA in the nucleolus. The chain is Methionine--tRNA ligase, cytoplasmic from Homo sapiens (Human).